The sequence spans 426 residues: Endoglucanase Z (426 aa).

The signal sequence occupies residues 1-43 (MPLSYLDKNPVIDSKKHALRKKLFLSCAYFGLSLACLSSNAWA). The tract at residues 44 to 332 (SVEPLSVNGN…VKSIIQSWPY (289 aa)) is catalytic. Glu176 (proton donor) is an active-site residue. Glu263 functions as the Nucleophile in the catalytic mechanism. Positions 333–366 (KAGSAASATTDPSTDTTTDTTVDEPTTTDTPATA) are linker. The disordered stretch occupies residues 336–367 (SAASATTDPSTDTTTDTTVDEPTTTDTPATAD). Positions 367–426 (DCANANVYPNWVSKDWAGGQPTHNEAGQSIVYKGNLYTANWYTASVPGSDSSWTQVGSCN) are cellulose-binding. Cys368 and Cys425 are disulfide-bonded.

Belongs to the glycosyl hydrolase 5 (cellulase A) family.

It localises to the secreted. It carries out the reaction Endohydrolysis of (1-&gt;4)-beta-D-glucosidic linkages in cellulose, lichenin and cereal beta-D-glucans.. Its function is as follows. Represents 97% of the global cellulase activity. This is Endoglucanase Z (celZ) from Dickeya dadantii (strain 3937) (Erwinia chrysanthemi (strain 3937)).